Consider the following 383-residue polypeptide: tRNA-specific 2-thiouridylase MnmA (383 aa).

ATP is bound by residues 11 to 18 (GLSGGVDS) and Met37. The interaction with target base in tRNA stretch occupies residues 97–99 (NPD). Cys102 acts as the Nucleophile in catalysis. Cys102 and Cys200 are joined by a disulfide. An ATP-binding site is contributed by Gly127. The segment at 150 to 152 (KDQ) is interaction with tRNA. Cys200 serves as the catalytic Cysteine persulfide intermediate. The segment at 312 to 313 (RY) is interaction with tRNA. The segment at 361–383 (IDTAHPADRSAPPALQTQSTEVV) is disordered.

It belongs to the MnmA/TRMU family.

The protein resides in the cytoplasm. It carries out the reaction S-sulfanyl-L-cysteinyl-[protein] + uridine(34) in tRNA + AH2 + ATP = 2-thiouridine(34) in tRNA + L-cysteinyl-[protein] + A + AMP + diphosphate + H(+). Catalyzes the 2-thiolation of uridine at the wobble position (U34) of tRNA, leading to the formation of s(2)U34. The protein is tRNA-specific 2-thiouridylase MnmA of Halorhodospira halophila (strain DSM 244 / SL1) (Ectothiorhodospira halophila (strain DSM 244 / SL1)).